A 146-amino-acid polypeptide reads, in one-letter code: Hemoglobin subunit beta-1/2 (146 aa).

Position 1 is an N-acetylvaline (Val-1). The Globin domain maps to 2–146 (HLTGEEKSGL…VANALAHKYH (145 aa)). Thr-12 carries the post-translational modification Phosphothreonine. Position 59 is an N6-acetyllysine (Lys-59). Residue His-63 coordinates heme b. Lys-82 is modified (N6-acetyllysine). Residue His-92 participates in heme b binding. At Cys-93 the chain carries S-nitrosocysteine. An N6-acetyllysine modification is found at Lys-144.

Belongs to the globin family. In terms of assembly, heterotetramer of two alpha chains and two beta chains. Red blood cells.

Functionally, involved in oxygen transport from the lung to the various peripheral tissues. The polypeptide is Hemoglobin subunit beta-1/2 (HBB) (Physeter macrocephalus (Sperm whale)).